The sequence spans 308 residues: Putative proline iminopeptidase (308 aa).

The 261-residue stretch at 30–290 (KPVLYIHGGP…LYVTNNAGHS (261 aa)) folds into the AB hydrolase-1 domain. Serine 105 acts as the Nucleophile in catalysis. Residue aspartate 261 is part of the active site. Histidine 289 functions as the Proton donor in the catalytic mechanism.

It belongs to the peptidase S33 family.

The protein resides in the cytoplasm. It carries out the reaction Release of N-terminal proline from a peptide.. Its function is as follows. Specifically catalyzes the removal of N-terminal proline residues from peptides. In Mycoplasma genitalium (strain ATCC 33530 / DSM 19775 / NCTC 10195 / G37) (Mycoplasmoides genitalium), this protein is Putative proline iminopeptidase (pip).